Reading from the N-terminus, the 631-residue chain is 1-deoxy-D-xylulose-5-phosphate synthase (631 aa).

Residues His87 and 128-130 (GHS) contribute to the thiamine diphosphate site. A Mg(2+)-binding site is contributed by Asp159. Thiamine diphosphate contacts are provided by residues 160–161 (GA), Asn188, Phe295, and Glu377. Residue Asn188 coordinates Mg(2+).

Belongs to the transketolase family. DXPS subfamily. As to quaternary structure, homodimer. Mg(2+) is required as a cofactor. It depends on thiamine diphosphate as a cofactor.

It catalyses the reaction D-glyceraldehyde 3-phosphate + pyruvate + H(+) = 1-deoxy-D-xylulose 5-phosphate + CO2. The protein operates within metabolic intermediate biosynthesis; 1-deoxy-D-xylulose 5-phosphate biosynthesis; 1-deoxy-D-xylulose 5-phosphate from D-glyceraldehyde 3-phosphate and pyruvate: step 1/1. Catalyzes the acyloin condensation reaction between C atoms 2 and 3 of pyruvate and glyceraldehyde 3-phosphate to yield 1-deoxy-D-xylulose-5-phosphate (DXP). In Pseudomonas putida (strain ATCC 47054 / DSM 6125 / CFBP 8728 / NCIMB 11950 / KT2440), this protein is 1-deoxy-D-xylulose-5-phosphate synthase.